The primary structure comprises 322 residues: Nuclease 1, mitochondrial (322 aa).

His142 acts as the Proton acceptor in catalysis. Asn174 lines the Mg(2+) pocket.

This sequence belongs to the DNA/RNA non-specific endonuclease family. As to quaternary structure, homodimer. Mn(2+) is required as a cofactor. It depends on Mg(2+) as a cofactor.

It is found in the mitochondrion inner membrane. This enzyme has both RNase and DNase activity. It degrades single-stranded DNA and RNA. The sequence is that of Nuclease 1, mitochondrial (pnu1) from Schizosaccharomyces pombe (strain 972 / ATCC 24843) (Fission yeast).